The sequence spans 247 residues: Cell division protein ZapD (247 aa).

The protein belongs to the ZapD family. In terms of assembly, interacts with FtsZ.

The protein localises to the cytoplasm. In terms of biological role, cell division factor that enhances FtsZ-ring assembly. Directly interacts with FtsZ and promotes bundling of FtsZ protofilaments, with a reduction in FtsZ GTPase activity. In Escherichia coli O17:K52:H18 (strain UMN026 / ExPEC), this protein is Cell division protein ZapD.